An 814-amino-acid polypeptide reads, in one-letter code: Protein ADP-ribosyltransferase PARP3 (814 aa).

Composition is skewed to basic and acidic residues over residues 1 to 19 (MKVH…EQKG) and 27 to 48 (EGKL…DDGR). The segment at 1 to 52 (MKVHETRSHAHMSGDEQKGNLRKHKAEGKLPESEQSQKKAKPENDDGRSVNG) is disordered. The PADR1 zinc-binding domain occupies 38 to 186 (KKAKPENDDG…KRELGSADKP (149 aa)). Residues 105 to 150 (GALAKCPLCGGTLICDNEKRFVCGGEISEWCSCVFSTKDPPRKEEP) form a zinc ribbon region. Zn(2+)-binding residues include C110, C113, C127, and C137. 2 TPR repeats span residues 182 to 215 (SADK…NGGK) and 277 to 310 (DLSV…YGKR). Positions 187-274 (FVGMMISLMG…EAQPLEAYDV (88 aa)) constitute a BRCT domain. The 101-residue stretch at 322–422 (GGKIFEKDGL…KKIQKKPHKF (101 aa)) folds into the WGR domain. A PARP alpha-helical domain is found at 449 to 568 (HCKLDSFVAN…DINTASRLIG (120 aa)). A PARP catalytic domain is found at 577 to 808 (DPLSDRYKKL…VKYEEKGTEI (232 aa)).

It belongs to the ARTD/PARP family.

Its subcellular location is the nucleus. The catalysed reaction is L-aspartyl-[protein] + NAD(+) = 4-O-(ADP-D-ribosyl)-L-aspartyl-[protein] + nicotinamide. It carries out the reaction L-glutamyl-[protein] + NAD(+) = 5-O-(ADP-D-ribosyl)-L-glutamyl-[protein] + nicotinamide. Its function is as follows. Involved in the base excision repair (BER) pathway, by catalyzing the poly(ADP-ribosyl)ation of a limited number of acceptor proteins involved in chromatin architecture and in DNA metabolism. This modification follows DNA damages and appears as an obligatory step in a detection/signaling pathway leading to the reparation of DNA strand breaks. The chain is Protein ADP-ribosyltransferase PARP3 (PARP3) from Arabidopsis thaliana (Mouse-ear cress).